Here is an 89-residue protein sequence, read N- to C-terminus: DNA/RNA-binding protein Alba (89 aa).

The protein belongs to the histone-like Alba family.

The protein localises to the cytoplasm. It localises to the chromosome. Functionally, binds double-stranded DNA tightly but without sequence specificity. Involved in DNA compaction. The protein is DNA/RNA-binding protein Alba of Methanothrix thermoacetophila (strain DSM 6194 / JCM 14653 / NBRC 101360 / PT) (Methanosaeta thermophila).